We begin with the raw amino-acid sequence, 631 residues long: Probable ATP-dependent RNA helicase DDX53 (631 aa).

The region spanning Glu-48–Ile-109 is the KH domain. Positions Arg-222 to Ser-250 match the Q motif motif. ATP is bound by residues Lys-244, Gln-249, Thr-268–Thr-273, and His-311. A Helicase ATP-binding domain is found at Trp-253–Val-428. The DEAD box signature appears at Asp-376–Asp-379. One can recognise a Helicase C-terminal domain in the interval Thr-440–Ala-601.

The protein belongs to the DEAD box helicase family. In terms of tissue distribution, expressed in testis. Wide expression in various cancer tissues and cancer cell lines.

It localises to the nucleus. The enzyme catalyses ATP + H2O = ADP + phosphate + H(+). This Homo sapiens (Human) protein is Probable ATP-dependent RNA helicase DDX53 (DDX53).